We begin with the raw amino-acid sequence, 243 residues long: 1-(5-phosphoribosyl)-5-[(5-phosphoribosylamino)methylideneamino] imidazole-4-carboxamide isomerase (243 aa).

Catalysis depends on D10, which acts as the Proton acceptor. The Proton donor role is filled by D129.

Belongs to the HisA/HisF family.

Its subcellular location is the cytoplasm. It catalyses the reaction 1-(5-phospho-beta-D-ribosyl)-5-[(5-phospho-beta-D-ribosylamino)methylideneamino]imidazole-4-carboxamide = 5-[(5-phospho-1-deoxy-D-ribulos-1-ylimino)methylamino]-1-(5-phospho-beta-D-ribosyl)imidazole-4-carboxamide. It participates in amino-acid biosynthesis; L-histidine biosynthesis; L-histidine from 5-phospho-alpha-D-ribose 1-diphosphate: step 4/9. The protein is 1-(5-phosphoribosyl)-5-[(5-phosphoribosylamino)methylideneamino] imidazole-4-carboxamide isomerase of Nocardia farcinica (strain IFM 10152).